The chain runs to 671 residues: DNA ligase (671 aa).

NAD(+) is bound by residues 34–38, 83–84, and Glu117; these read DAEYD and SL. Lys119 functions as the N6-AMP-lysine intermediate in the catalytic mechanism. NAD(+) contacts are provided by Arg140, Glu177, Lys293, and Lys317. Zn(2+) is bound by residues Cys411, Cys414, Cys429, and Cys434. The 81-residue stretch at 591-671 folds into the BRCT domain; that stretch reads KVGGKFTGKT…EFLQMLEGEQ (81 aa).

This sequence belongs to the NAD-dependent DNA ligase family. LigA subfamily. It depends on Mg(2+) as a cofactor. Mn(2+) serves as cofactor.

It catalyses the reaction NAD(+) + (deoxyribonucleotide)n-3'-hydroxyl + 5'-phospho-(deoxyribonucleotide)m = (deoxyribonucleotide)n+m + AMP + beta-nicotinamide D-nucleotide.. DNA ligase that catalyzes the formation of phosphodiester linkages between 5'-phosphoryl and 3'-hydroxyl groups in double-stranded DNA using NAD as a coenzyme and as the energy source for the reaction. It is essential for DNA replication and repair of damaged DNA. The chain is DNA ligase from Geobacter metallireducens (strain ATCC 53774 / DSM 7210 / GS-15).